The chain runs to 521 residues: Glutamate--cysteine ligase (521 aa).

It belongs to the glutamate--cysteine ligase type 1 family. Type 1 subfamily.

The enzyme catalyses L-cysteine + L-glutamate + ATP = gamma-L-glutamyl-L-cysteine + ADP + phosphate + H(+). It functions in the pathway sulfur metabolism; glutathione biosynthesis; glutathione from L-cysteine and L-glutamate: step 1/2. This Buchnera aphidicola subsp. Baizongia pistaciae (strain Bp) protein is Glutamate--cysteine ligase (gshA).